Consider the following 375-residue polypeptide: MAIGEKITISVIKADIGGWPGHSRVHPQLIEAAEEVLAKAKEEGTIIDFYVAYAGDDLQLIMTHKKGVDSPDIHGLAWKAFEEATEIAKEFGLYGAGQDLLKDAFSGNIRGMGPGIAEMEITLRKSEPIVTFHMDKTEPGAFNLPIFRMFADPFNTAGLVIDPNMHMGFRFEVWDIKEHKRVILNTPEEIYDLLALIGAKSRYVIKRVYPKEGHKISKDEPVAVISTEKLYEIAGEYVGKDDPVAIVRAQSGLPALGEVLEPFAFPHLVSGWMRGSHNGPIMPVPMHQANPTRFDGPPRVVALGWQISPEGKLVGPVDLFDDPAFDYARQKALEITEYIRRHGPFEPHRLPLEDMEYTTLPGVLKKLEERFEDIE.

The active-site Proton acceptor; for FBP phosphatase activity is the Asp-15. Residues Asp-15, His-22, Asp-56, and Asp-57 each coordinate Mg(2+). His-22 serves as a coordination point for beta-D-fructose 1,6-bisphosphate. A dihydroxyacetone phosphate-binding site is contributed by His-22. Residue Tyr-94 coordinates beta-D-fructose 1,6-bisphosphate. Residue Gln-98 participates in Mg(2+) binding. Beta-D-fructose 1,6-bisphosphate is bound at residue Gly-107–Asn-108. Position 135 (Asp-135) interacts with Mg(2+). Lys-136 contacts beta-D-fructose 1,6-bisphosphate. Lys-136 is a binding site for dihydroxyacetone phosphate. Tyr-237 serves as the catalytic Proton donor/acceptor; for FBP aldolase activity. Mg(2+)-binding residues include Lys-240, Asp-241, and Asp-242. Catalysis depends on Lys-240, which acts as the Schiff-base intermediate with DHAP; for FBP aldolase activity. Beta-D-fructose 1,6-bisphosphate is bound by residues Gln-250–Ser-251, Arg-274, Asp-295, and Tyr-357. The dihydroxyacetone phosphate site is built by Arg-274 and Asp-295.

This sequence belongs to the FBP aldolase/phosphatase family. In terms of assembly, homooctamer; dimer of tetramers. Mg(2+) serves as cofactor.

It carries out the reaction beta-D-fructose 1,6-bisphosphate = D-glyceraldehyde 3-phosphate + dihydroxyacetone phosphate. The catalysed reaction is beta-D-fructose 1,6-bisphosphate + H2O = beta-D-fructose 6-phosphate + phosphate. The protein operates within carbohydrate biosynthesis; gluconeogenesis. FBPase activity is inhibited by Ca(2+), ATP, ADP and phosphoenolpyruvate. In terms of biological role, catalyzes two subsequent steps in gluconeogenesis: the aldol condensation of dihydroxyacetone phosphate (DHAP) and glyceraldehyde-3-phosphate (GA3P) to fructose-1,6-bisphosphate (FBP), and the dephosphorylation of FBP to fructose-6-phosphate (F6P). Can also dephosphorylate, with lower activity, other related substrates including fructose-1-phosphate, fructose-6-phosphate, glucose-1-phosphate, glucose-6-phosphate, glycerol-2-phosphate, phosphoenolpyruvate, 5'-AMP, 6'-ADP and 7'-ATP. This Thermococcus onnurineus (strain NA1) protein is Fructose-1,6-bisphosphate aldolase/phosphatase.